A 323-amino-acid polypeptide reads, in one-letter code: HPr kinase/phosphorylase (323 aa).

Catalysis depends on residues His146 and Lys167. 161–168 (GESGLGKS) contacts ATP. Ser168 contributes to the Mg(2+) binding site. Asp185 acts as the Proton acceptor; for phosphorylation activity. Proton donor; for dephosphorylation activity in catalysis. An important for the catalytic mechanism of both phosphorylation and dephosphorylation region spans residues 209–218 (LEVRGLGLLD). Position 210 (Glu210) interacts with Mg(2+). Residue Arg250 is part of the active site. The tract at residues 271-276 (QVAAGR) is important for the catalytic mechanism of dephosphorylation.

The protein belongs to the HPrK/P family. In terms of assembly, homohexamer. The cofactor is Mg(2+).

The catalysed reaction is [HPr protein]-L-serine + ATP = [HPr protein]-O-phospho-L-serine + ADP + H(+). It carries out the reaction [HPr protein]-O-phospho-L-serine + phosphate + H(+) = [HPr protein]-L-serine + diphosphate. Catalyzes the ATP- as well as the pyrophosphate-dependent phosphorylation of a specific serine residue in HPr, a phosphocarrier protein of the phosphoenolpyruvate-dependent sugar phosphotransferase system (PTS). HprK/P also catalyzes the pyrophosphate-producing, inorganic phosphate-dependent dephosphorylation (phosphorolysis) of seryl-phosphorylated HPr (P-Ser-HPr). The polypeptide is HPr kinase/phosphorylase (Cupriavidus necator (strain ATCC 17699 / DSM 428 / KCTC 22496 / NCIMB 10442 / H16 / Stanier 337) (Ralstonia eutropha)).